We begin with the raw amino-acid sequence, 100 residues long: Urease subunit gamma (100 aa).

The protein belongs to the urease gamma subunit family. In terms of assembly, heterotrimer of UreA (gamma), UreB (beta) and UreC (alpha) subunits. Three heterotrimers associate to form the active enzyme.

Its subcellular location is the cytoplasm. It catalyses the reaction urea + 2 H2O + H(+) = hydrogencarbonate + 2 NH4(+). The protein operates within nitrogen metabolism; urea degradation; CO(2) and NH(3) from urea (urease route): step 1/1. This chain is Urease subunit gamma, found in Pseudomonas aeruginosa (strain UCBPP-PA14).